The chain runs to 315 residues: Tetraacyldisaccharide 4'-kinase (315 aa).

ATP is bound at residue 52 to 59; sequence TVGGTGKT.

It belongs to the LpxK family.

The enzyme catalyses a lipid A disaccharide + ATP = a lipid IVA + ADP + H(+). It participates in glycolipid biosynthesis; lipid IV(A) biosynthesis; lipid IV(A) from (3R)-3-hydroxytetradecanoyl-[acyl-carrier-protein] and UDP-N-acetyl-alpha-D-glucosamine: step 6/6. Transfers the gamma-phosphate of ATP to the 4'-position of a tetraacyldisaccharide 1-phosphate intermediate (termed DS-1-P) to form tetraacyldisaccharide 1,4'-bis-phosphate (lipid IVA). The polypeptide is Tetraacyldisaccharide 4'-kinase (Ruthia magnifica subsp. Calyptogena magnifica).